A 104-amino-acid polypeptide reads, in one-letter code: Cell cycle protein GpsB (104 aa).

Residues 34 to 72 (LDVVIQDYEVFQKKIERLEQEIHQLRTEAKRAASERQTR) adopt a coiled-coil conformation. Over residues 60–71 (TEAKRAASERQT) the composition is skewed to basic and acidic residues. Positions 60–82 (TEAKRAASERQTRHQTSPSVGST) are disordered. A compositionally biased stretch (polar residues) spans 73–82 (HQTSPSVGST).

This sequence belongs to the GpsB family. Forms polymers through the coiled coil domains. Interacts with PBP1, MreC and EzrA.

The protein localises to the cytoplasm. In terms of biological role, divisome component that associates with the complex late in its assembly, after the Z-ring is formed, and is dependent on DivIC and PBP2B for its recruitment to the divisome. Together with EzrA, is a key component of the system that regulates PBP1 localization during cell cycle progression. Its main role could be the removal of PBP1 from the cell pole after pole maturation is completed. Also contributes to the recruitment of PBP1 to the division complex. Not essential for septum formation. The chain is Cell cycle protein GpsB from Halalkalibacterium halodurans (strain ATCC BAA-125 / DSM 18197 / FERM 7344 / JCM 9153 / C-125) (Bacillus halodurans).